An 89-amino-acid polypeptide reads, in one-letter code: Small ribosomal subunit protein uS15 (89 aa).

This sequence belongs to the universal ribosomal protein uS15 family. In terms of assembly, part of the 30S ribosomal subunit. Forms a bridge to the 50S subunit in the 70S ribosome, contacting the 23S rRNA.

Its function is as follows. One of the primary rRNA binding proteins, it binds directly to 16S rRNA where it helps nucleate assembly of the platform of the 30S subunit by binding and bridging several RNA helices of the 16S rRNA. Functionally, forms an intersubunit bridge (bridge B4) with the 23S rRNA of the 50S subunit in the ribosome. The protein is Small ribosomal subunit protein uS15 of Neisseria gonorrhoeae (strain ATCC 700825 / FA 1090).